Consider the following 61-residue polypeptide: Small ribosomal subunit protein uS14B (61 aa).

Residues cysteine 24, cysteine 27, cysteine 40, and cysteine 43 each coordinate Zn(2+).

It belongs to the universal ribosomal protein uS14 family. Zinc-binding uS14 subfamily. As to quaternary structure, part of the 30S ribosomal subunit. Contacts proteins S3 and S10. Zn(2+) serves as cofactor.

Its function is as follows. Binds 16S rRNA, required for the assembly of 30S particles and may also be responsible for determining the conformation of the 16S rRNA at the A site. In Lactococcus lactis subsp. lactis (strain IL1403) (Streptococcus lactis), this protein is Small ribosomal subunit protein uS14B.